Reading from the N-terminus, the 368-residue chain is Putative J domain-containing protein R445 (368 aa).

The region spanning 13 to 83 (DLYKILGLTN…KQRNEYNQRL (71 aa)) is the J domain.

In Acanthamoeba polyphaga mimivirus (APMV), this protein is Putative J domain-containing protein R445.